Reading from the N-terminus, the 75-residue chain is Acyl carrier protein (75 aa).

One can recognise a Carrier domain in the interval 1-75; it reads MSVFDKVKSI…DAVNYIKENQ (75 aa). Ser35 is modified (O-(pantetheine 4'-phosphoryl)serine).

This sequence belongs to the acyl carrier protein (ACP) family. Post-translationally, 4'-phosphopantetheine is transferred from CoA to a specific serine of apo-ACP by AcpS. This modification is essential for activity because fatty acids are bound in thioester linkage to the sulfhydryl of the prosthetic group.

The protein localises to the cytoplasm. It participates in lipid metabolism; fatty acid biosynthesis. In terms of biological role, carrier of the growing fatty acid chain in fatty acid biosynthesis. This Desulfitobacterium hafniense (strain Y51) protein is Acyl carrier protein.